Consider the following 278-residue polypeptide: MFSQLSTNFYPTILQPQTVHRGTAPPNALPAERAPCLIGRPVHFAHGPFAGRTIRASLDEIQAAQLGRKYARVDRRPLDPPPAVRLRLFNVYNAGTEQQTEEEFEEYGDTLGLGFVCTLDLFPLPEGSSCHRSPGPYAEPPVHRVGGCAIYESEKATNALVGSTFVQPTCVTFEGRSTLVFVFSDLAVKYEGEFLLRYRVFDLFSLPRGHRDIAIQAECYGAAFRIYTTKDFPGLPPSTALTKELARVGVRLSVRDTGKKATTKRRKRSDSFDEDDSS.

Residues Gly-51 to Arg-255 enclose the Velvet domain. The disordered stretch occupies residues Thr-257 to Ser-278.

Belongs to the velvet family.

Its subcellular location is the nucleus. Functionally, velvet-domain-containing protein that probably acts as a positive regulator of sexual development. This is Probable velvet family sexual development regulator SCHCODRAFT_28806 from Schizophyllum commune (strain H4-8 / FGSC 9210) (Split gill fungus).